A 181-amino-acid polypeptide reads, in one-letter code: Beta-lactoglobulin-2 (181 aa).

An N-terminal signal peptide occupies residues 1–18 (MKCLLLALGLSLMCGNQA). Cystine bridges form between C84–C179 and C124–C138.

The protein belongs to the calycin superfamily. Lipocalin family. As to quaternary structure, monomer.

Its subcellular location is the secreted. Its function is as follows. Lactoglobulin is the primary component of whey, it binds retinol and is probably involved in the transport of that molecule. In Equus caballus (Horse), this protein is Beta-lactoglobulin-2 (LGB2).